Reading from the N-terminus, the 256-residue chain is uncharacterized protein (256 aa).

Residues 187 to 223 (MEEEEISEVEDALNVLQRLCAQEEGDNKEAETNNNNY) adopt a coiled-coil conformation.

This is an uncharacterized protein from Ostreid herpesvirus 1 (isolate France) (OsHV-1).